The primary structure comprises 160 residues: Ureidoglycolate lyase (160 aa).

The protein belongs to the ureidoglycolate lyase family. Homodimer. It depends on Ni(2+) as a cofactor.

It carries out the reaction (S)-ureidoglycolate = urea + glyoxylate. It functions in the pathway nitrogen metabolism; (S)-allantoin degradation. Functionally, catalyzes the catabolism of the allantoin degradation intermediate (S)-ureidoglycolate, generating urea and glyoxylate. Involved in the anaerobic utilization of allantoin as sole nitrogen source. Reinforces the induction of genes involved in the degradation of allantoin and glyoxylate by producing glyoxylate. This is Ureidoglycolate lyase from Escherichia coli O139:H28 (strain E24377A / ETEC).